A 325-amino-acid polypeptide reads, in one-letter code: Holliday junction branch migration complex subunit RuvB (325 aa).

The tract at residues 1 to 181 (MENRLINPVE…FGIVQRLEFY (181 aa)) is large ATPase domain (RuvB-L). ATP contacts are provided by residues Ile-20, Arg-21, Gly-62, Lys-65, Thr-66, Thr-67, 128–130 (EDF), Arg-171, Tyr-181, and Arg-218. Thr-66 serves as a coordination point for Mg(2+). The segment at 182 to 252 (NIEDLTTIVS…IADSALDMLA (71 aa)) is small ATPAse domain (RuvB-S). The tract at residues 255–325 (RRGLDHLDRR…VLTQMAIDQL (71 aa)) is head domain (RuvB-H). DNA is bound by residues Arg-291, Arg-310, and Arg-315.

Belongs to the RuvB family. As to quaternary structure, homohexamer. Forms an RuvA(8)-RuvB(12)-Holliday junction (HJ) complex. HJ DNA is sandwiched between 2 RuvA tetramers; dsDNA enters through RuvA and exits via RuvB. An RuvB hexamer assembles on each DNA strand where it exits the tetramer. Each RuvB hexamer is contacted by two RuvA subunits (via domain III) on 2 adjacent RuvB subunits; this complex drives branch migration. In the full resolvosome a probable DNA-RuvA(4)-RuvB(12)-RuvC(2) complex forms which resolves the HJ.

The protein resides in the cytoplasm. It catalyses the reaction ATP + H2O = ADP + phosphate + H(+). Functionally, the RuvA-RuvB-RuvC complex processes Holliday junction (HJ) DNA during genetic recombination and DNA repair, while the RuvA-RuvB complex plays an important role in the rescue of blocked DNA replication forks via replication fork reversal (RFR). RuvA specifically binds to HJ cruciform DNA, conferring on it an open structure. The RuvB hexamer acts as an ATP-dependent pump, pulling dsDNA into and through the RuvAB complex. RuvB forms 2 homohexamers on either side of HJ DNA bound by 1 or 2 RuvA tetramers; 4 subunits per hexamer contact DNA at a time. Coordinated motions by a converter formed by DNA-disengaged RuvB subunits stimulates ATP hydrolysis and nucleotide exchange. Immobilization of the converter enables RuvB to convert the ATP-contained energy into a lever motion, pulling 2 nucleotides of DNA out of the RuvA tetramer per ATP hydrolyzed, thus driving DNA branch migration. The RuvB motors rotate together with the DNA substrate, which together with the progressing nucleotide cycle form the mechanistic basis for DNA recombination by continuous HJ branch migration. Branch migration allows RuvC to scan DNA until it finds its consensus sequence, where it cleaves and resolves cruciform DNA. The protein is Holliday junction branch migration complex subunit RuvB of Psychrobacter sp. (strain PRwf-1).